We begin with the raw amino-acid sequence, 301 residues long: Cell division control protein 2 homolog 1 (301 aa).

A Protein kinase domain is found at 5–297; it reads YQRLEKIGEG…AAQALEHPYF (293 aa). Residues 11–19 and Lys-34 each bind ATP; that span reads IGEGSYGVV. At Ser-15 the chain carries Phosphoserine. Tyr-16 carries the post-translational modification Phosphotyrosine. Residue Asp-127 is the Proton acceptor of the active site. Thr-160 is subject to Phosphothreonine; by CAK.

Belongs to the protein kinase superfamily. CMGC Ser/Thr protein kinase family. CDC2/CDKX subfamily. As to quaternary structure, forms a stable but non-covalent complex with a regulatory subunit and with a cyclin.

The enzyme catalyses L-seryl-[protein] + ATP = O-phospho-L-seryl-[protein] + ADP + H(+). It catalyses the reaction L-threonyl-[protein] + ATP = O-phospho-L-threonyl-[protein] + ADP + H(+). Phosphorylation at Ser-15 or Tyr-16 inactivates the enzyme, while phosphorylation at Thr-160 activates it. Its function is as follows. Probably involved in the control of the cell cycle. This is Cell division control protein 2 homolog 1 (CRK1) from Trypanosoma congolense.